An 812-amino-acid chain; its full sequence is Probable inorganic carbon transporter subunit DabA (812 aa).

Zn(2+) contacts are provided by Cys337, Asp339, His499, and Cys514.

Belongs to the inorganic carbon transporter (TC 9.A.2) DabA family. In terms of assembly, forms a complex with DabB. It depends on Zn(2+) as a cofactor.

It is found in the cell inner membrane. Part of an energy-coupled inorganic carbon pump. This is Probable inorganic carbon transporter subunit DabA from Xanthomonas oryzae pv. oryzae (strain KACC10331 / KXO85).